A 98-amino-acid chain; its full sequence is Aspartyl/glutamyl-tRNA(Asn/Gln) amidotransferase subunit C (98 aa).

The protein belongs to the GatC family. Heterotrimer of A, B and C subunits.

The enzyme catalyses L-glutamyl-tRNA(Gln) + L-glutamine + ATP + H2O = L-glutaminyl-tRNA(Gln) + L-glutamate + ADP + phosphate + H(+). It catalyses the reaction L-aspartyl-tRNA(Asn) + L-glutamine + ATP + H2O = L-asparaginyl-tRNA(Asn) + L-glutamate + ADP + phosphate + 2 H(+). In terms of biological role, allows the formation of correctly charged Asn-tRNA(Asn) or Gln-tRNA(Gln) through the transamidation of misacylated Asp-tRNA(Asn) or Glu-tRNA(Gln) in organisms which lack either or both of asparaginyl-tRNA or glutaminyl-tRNA synthetases. The reaction takes place in the presence of glutamine and ATP through an activated phospho-Asp-tRNA(Asn) or phospho-Glu-tRNA(Gln). This Micrococcus luteus (strain ATCC 4698 / DSM 20030 / JCM 1464 / CCM 169 / CCUG 5858 / IAM 1056 / NBRC 3333 / NCIMB 9278 / NCTC 2665 / VKM Ac-2230) (Micrococcus lysodeikticus) protein is Aspartyl/glutamyl-tRNA(Asn/Gln) amidotransferase subunit C.